A 628-amino-acid chain; its full sequence is DNA primase (628 aa).

Residues 40 to 64 (CPFHEERSPSFSVAEDKQIFHCFGC) form a CHC2-type zinc finger. One can recognise a Toprim domain in the interval 269 to 351 (NTVLLFEGFM…DLSIVSIPEK (83 aa)). Mg(2+) contacts are provided by E275, D319, and D321.

The protein belongs to the DnaG primase family. As to quaternary structure, monomer. Interacts with DnaB. Zn(2+) is required as a cofactor. Requires Mg(2+) as cofactor.

It catalyses the reaction ssDNA + n NTP = ssDNA/pppN(pN)n-1 hybrid + (n-1) diphosphate.. Its function is as follows. RNA polymerase that catalyzes the synthesis of short RNA molecules used as primers for DNA polymerase during DNA replication. The chain is DNA primase from Enterococcus faecalis (strain ATCC 700802 / V583).